Consider the following 359-residue polypeptide: Nicotinate-nucleotide--dimethylbenzimidazole phosphoribosyltransferase (359 aa).

Catalysis depends on glutamate 318, which acts as the Proton acceptor.

Belongs to the CobT family. Homodimer.

The catalysed reaction is 5,6-dimethylbenzimidazole + nicotinate beta-D-ribonucleotide = alpha-ribazole 5'-phosphate + nicotinate + H(+). Its pathway is nucleoside biosynthesis; alpha-ribazole biosynthesis; alpha-ribazole from 5,6-dimethylbenzimidazole: step 1/2. Catalyzes the synthesis of alpha-ribazole-5'-phosphate from nicotinate mononucleotide (NAMN) and 5,6-dimethylbenzimidazole (DMB). The chain is Nicotinate-nucleotide--dimethylbenzimidazole phosphoribosyltransferase from Escherichia coli O17:K52:H18 (strain UMN026 / ExPEC).